A 2280-amino-acid chain; its full sequence is Genome polyprotein (2280 aa).

Residues Glu454–Lys608 enclose the SF3 helicase domain. ATP is bound at residue Gly480 to Thr487. Tyr965 carries the post-translational modification O-(5'-phospho-RNA)-tyrosine. A Peptidase C24 domain is found at Gly1054–Glu1202. Catalysis depends on for 3CLpro activity residues His1084, Glu1105, and Cys1169. In terms of domain architecture, RdRp catalytic spans Gly1442 to Phe1567. The interval Gly1722–Pro1746 is disordered. Over residues Asn1723–Pro1735 the composition is skewed to polar residues.

As to quaternary structure, homodimer. Homomultimer. In terms of processing, specific enzymatic cleavages in vivo yield mature proteins. Pro-Pol is first autocatalytically cleaved, then processes the whole polyprotein. VPg is uridylylated by the polymerase and is covalently attached to the 5'-end of the polyadenylated genomic and subgenomic RNAs. This uridylylated form acts as a nucleotide-peptide primer for the polymerase.

The protein resides in the virion. It is found in the host cytoplasm. The enzyme catalyses a ribonucleoside 5'-triphosphate + H2O = a ribonucleoside 5'-diphosphate + phosphate + H(+). It carries out the reaction RNA(n) + a ribonucleoside 5'-triphosphate = RNA(n+1) + diphosphate. It catalyses the reaction Endopeptidase with a preference for cleavage when the P1 position is occupied by Glu-|-Xaa and the P1' position is occupied by Gly-|-Yaa.. Its function is as follows. Together with NTPase and NS4, initiates the formation of the replication complex. Induces the proliferation of the host smooth ER membranes forming long tubular structures. These remodeled membranes probably form the viral factories that contain the replication complex. Displays NTPase activity, but no helicase activity. Induces the formation of convoluted membranes derived from the host ER. These remodeled membranes probably form the viral factories that contain the replication complex. Together with NS2 and NS4, initiates the formation of the replication complex. Functionally, probable key protein responsible for the formation of membrane alterations by the virus. Induces the formation of convoluted membranes derived from the host ER. These remodeled membranes probably form the viral factories that contain the replication complex. Together with NS2 and NTPase, initiates the formation of the replication complex. In terms of biological role, viral genome-linked protein is covalently linked to the 5'-end of the positive-strand, negative-strand genomic RNAs and subgenomic RNA. Acts as a genome-linked replication primer. May recruit ribosome to viral RNA thereby promoting viral proteins translation. Interacts with host translation initiation complex to allow the translation of viral proteins. Its function is as follows. Protease-polymerase p76 processes the polyprotein: Pro-Pol is first released by autocleavage, then all other proteins are cleaved. Cleaves host translation initiation factor eIF4G1, eIF4G2 and PABP1 thereby inducing a shutdown of host protein synthesis. This shutdown may not prevent viral mRNA from being translated since viral Vpg replaces the cap. It is also an RNA-directed RNA polymerase which replicates genomic and antigenomic viral RNA by recognizing specific signals. Also transcribes a subgenomic mRNA by initiating RNA synthesis internally on antigenomic RNA. This sgRNA codes for structural proteins. Catalyzes the covalent attachment VPg with viral RNAs. Capsid protein self assembles to form an icosahedral capsid with a T=3 symmetry, about 38 nm in diameter, and consisting of 180 capsid proteins. The capsid encapsulate the genomic RNA and VP2 proteins. Attaches virion to target cells, inducing endocytosis of the viral particle. Acidification of the endosome induces conformational change of capsid protein thereby injecting virus genomic RNA into host cytoplasm. This chain is Genome polyprotein, found in Homo sapiens (Human).